Reading from the N-terminus, the 351-residue chain is Fe-S cluster assembly protein DRE2 (351 aa).

An N-terminal SAM-like domain region spans residues 1 to 151; that stretch reads MATTGRVLLL…KPDIGAQQAI (151 aa). The interval 93–118 is disordered; it reads RNRENKPWGLSDGNGNNANSSRRYND. The segment covering 105-114 has biased composition (polar residues); that stretch reads GNGNNANSSR. Positions 152–243 are linker; the sequence is PLKLGRRRKE…EDELLDEDDM (92 aa). Cys253, Cys264, Cys267, and Cys269 together coordinate [2Fe-2S] cluster. Residues 253–269 are fe-S binding site A; sequence CRPKPGKRRRACKDCSC. [4Fe-4S] cluster-binding residues include Cys314, Cys317, Cys325, and Cys328. 2 consecutive short sequence motifs (cx2C motif) follow at residues 314-317 and 325-328; these read CGNC and CDGC. The segment at 314-328 is fe-S binding site B; the sequence is CGNCSLGDAFRCDGC.

Belongs to the anamorsin family. Monomer. Interacts with TAH18. Interacts with MIA40. It depends on [2Fe-2S] cluster as a cofactor. [4Fe-4S] cluster serves as cofactor.

It is found in the cytoplasm. Its subcellular location is the mitochondrion intermembrane space. Functionally, component of the cytosolic iron-sulfur (Fe-S) protein assembly (CIA) machinery required for the maturation of extramitochondrial Fe-S proteins. Part of an electron transfer chain functioning in an early step of cytosolic Fe-S biogenesis, facilitating the de novo assembly of a [4Fe-4S] cluster on the scaffold complex CFD1-NBP35. Electrons are transferred to DRE2 from NADPH via the FAD- and FMN-containing protein TAH18. TAH18-DRE2 are also required for the assembly of the diferric tyrosyl radical cofactor of ribonucleotide reductase (RNR), probably by providing electrons for reduction during radical cofactor maturation in the catalytic small subunit RNR2. This Ajellomyces capsulatus (strain H143) (Darling's disease fungus) protein is Fe-S cluster assembly protein DRE2.